A 37-amino-acid chain; its full sequence is Esculentin-2SE (37 aa).

C31 and C37 are joined by a disulfide.

In terms of tissue distribution, expressed by the skin glands.

The protein localises to the secreted. Mast cell degranulating peptide. Causes histamine release from rat peritoneal mast cells in vitro. Has antibacterial activity against the Gram-negative bacterium E.coli K12 and Gram-positive bacterium M.luteus NCT C2665. In Lithobates sevosus (Dusky gopher frog), this protein is Esculentin-2SE.